Reading from the N-terminus, the 286-residue chain is UDP-3-O-acyl-N-acetylglucosamine deacetylase (286 aa).

Zn(2+) is bound by residues histidine 79, histidine 237, and aspartate 241. Histidine 264 acts as the Proton donor in catalysis.

This sequence belongs to the LpxC family. Requires Zn(2+) as cofactor.

It carries out the reaction a UDP-3-O-[(3R)-3-hydroxyacyl]-N-acetyl-alpha-D-glucosamine + H2O = a UDP-3-O-[(3R)-3-hydroxyacyl]-alpha-D-glucosamine + acetate. The protein operates within glycolipid biosynthesis; lipid IV(A) biosynthesis; lipid IV(A) from (3R)-3-hydroxytetradecanoyl-[acyl-carrier-protein] and UDP-N-acetyl-alpha-D-glucosamine: step 2/6. In terms of biological role, catalyzes the hydrolysis of UDP-3-O-myristoyl-N-acetylglucosamine to form UDP-3-O-myristoylglucosamine and acetate, the committed step in lipid A biosynthesis. The sequence is that of UDP-3-O-acyl-N-acetylglucosamine deacetylase from Chlamydia trachomatis serovar L2 (strain ATCC VR-902B / DSM 19102 / 434/Bu).